A 136-amino-acid polypeptide reads, in one-letter code: Phospholipase A2 (136 aa).

Ca(2+) is bound by residues tryptophan 8, glycine 10, and glycine 12. 5 cysteine pairs are disulfide-bonded: cysteine 9-cysteine 31, cysteine 30-cysteine 70, cysteine 37-cysteine 63, cysteine 61-cysteine 95, and cysteine 105-cysteine 115. Asparagine 16 carries N-linked (GlcNAc...) asparagine glycosylation. Residue histidine 34 is part of the active site. Ca(2+) is bound at residue aspartate 35. Residue aspartate 64 is part of the active site.

It belongs to the phospholipase A2 family. Requires Ca(2+) as cofactor. Expressed by the venom gland.

The protein localises to the secreted. The enzyme catalyses a 1,2-diacyl-sn-glycero-3-phosphocholine + H2O = a 1-acyl-sn-glycero-3-phosphocholine + a fatty acid + H(+). Functionally, PLA2 catalyzes the calcium-dependent hydrolysis of the 2-acyl groups in 3-sn-phosphoglycerides. In Bombus pensylvanicus (American bumblebee), this protein is Phospholipase A2.